The sequence spans 1055 residues: Pre-mRNA-splicing factor ATP-dependent RNA helicase-like protein cdc28 (1055 aa).

Basic and acidic residues predominate over residues 67-78 (PREGSRPKENYN). Residues 67–184 (PREGSRPKEN…TERLNDLRER (118 aa)) form a disordered region. Over residues 112–121 (PLKKKSRSKT) the composition is skewed to basic residues. Residues 122–132 (PKREIARRQRD) show a composition bias toward basic and acidic residues. Acidic residues predominate over residues 133–145 (EDEWESDEYEEVV). Residues 163 to 184 (QNHDYEKSSDPETERLNDLRER) show a composition bias toward basic and acidic residues. Residues 428 to 592 (LKAINEYQVL…FDEAPVFYVP (165 aa)) enclose the Helicase ATP-binding domain. 441 to 448 (AETGSGKT) lines the ATP pocket. The DEAH box signature appears at 539 to 542 (DEAH). The 174-residue stretch at 617–790 (TILQIHTTQP…NIVLLLKSLG (174 aa)) folds into the Helicase C-terminal domain.

The protein belongs to the DEAD box helicase family. DEAH subfamily. DDX16/PRP8 sub-subfamily.

The protein resides in the nucleus. It catalyses the reaction ATP + H2O = ADP + phosphate + H(+). Involved in pre-mRNA splicing. Is required together with ATP and at least one other factor, for the first cleavage-ligation reaction. Functions as a molecular motor in the activation of the precatalytic spliceosome for the first transesterification reaction of pre-mRNA splicing by hydrolyzing ATP to cause the activation of the spliceosome without the occurrence of splicing. This is Pre-mRNA-splicing factor ATP-dependent RNA helicase-like protein cdc28 (cdc28) from Schizosaccharomyces pombe (strain 972 / ATCC 24843) (Fission yeast).